A 360-amino-acid polypeptide reads, in one-letter code: UPF0283 membrane protein Asuc_0957 (360 aa).

The next 3 helical transmembrane spans lie at 74–94 (VIAV…QWLI), 102–122 (WIYF…LSAL), and 215–235 (AVEN…MLFL).

Belongs to the UPF0283 family.

It localises to the cell inner membrane. This Actinobacillus succinogenes (strain ATCC 55618 / DSM 22257 / CCUG 43843 / 130Z) protein is UPF0283 membrane protein Asuc_0957.